Here is a 254-residue protein sequence, read N- to C-terminus: Pyridoxine 5'-phosphate synthase (254 aa).

Position 8 (N8) interacts with 3-amino-2-oxopropyl phosphate. 10 to 11 (DH) contributes to the 1-deoxy-D-xylulose 5-phosphate binding site. R19 serves as a coordination point for 3-amino-2-oxopropyl phosphate. H44 acts as the Proton acceptor in catalysis. R46 and H51 together coordinate 1-deoxy-D-xylulose 5-phosphate. E74 (proton acceptor) is an active-site residue. T104 lines the 1-deoxy-D-xylulose 5-phosphate pocket. Residue H198 is the Proton donor of the active site. 3-amino-2-oxopropyl phosphate contacts are provided by residues G199 and 220 to 221 (GH).

It belongs to the PNP synthase family. In terms of assembly, homooctamer; tetramer of dimers.

The protein localises to the cytoplasm. It carries out the reaction 3-amino-2-oxopropyl phosphate + 1-deoxy-D-xylulose 5-phosphate = pyridoxine 5'-phosphate + phosphate + 2 H2O + H(+). It participates in cofactor biosynthesis; pyridoxine 5'-phosphate biosynthesis; pyridoxine 5'-phosphate from D-erythrose 4-phosphate: step 5/5. In terms of biological role, catalyzes the complicated ring closure reaction between the two acyclic compounds 1-deoxy-D-xylulose-5-phosphate (DXP) and 3-amino-2-oxopropyl phosphate (1-amino-acetone-3-phosphate or AAP) to form pyridoxine 5'-phosphate (PNP) and inorganic phosphate. This Caulobacter vibrioides (strain ATCC 19089 / CIP 103742 / CB 15) (Caulobacter crescentus) protein is Pyridoxine 5'-phosphate synthase.